The sequence spans 385 residues: 8-amino-7-oxononanoate synthase (385 aa).

Position 21 (Arg21) interacts with substrate. Residue Gly108–Phe109 coordinates pyridoxal 5'-phosphate. Substrate is bound at residue His133. Positions 179, 207, and 233 each coordinate pyridoxal 5'-phosphate. Lys236 is subject to N6-(pyridoxal phosphate)lysine. Thr352 contributes to the substrate binding site.

Belongs to the class-II pyridoxal-phosphate-dependent aminotransferase family. BioF subfamily. As to quaternary structure, homodimer. Pyridoxal 5'-phosphate serves as cofactor.

The enzyme catalyses 6-carboxyhexanoyl-[ACP] + L-alanine + H(+) = (8S)-8-amino-7-oxononanoate + holo-[ACP] + CO2. It participates in cofactor biosynthesis; biotin biosynthesis. Its function is as follows. Catalyzes the decarboxylative condensation of pimeloyl-[acyl-carrier protein] and L-alanine to produce 8-amino-7-oxononanoate (AON), [acyl-carrier protein], and carbon dioxide. The protein is 8-amino-7-oxononanoate synthase of Pseudescherichia vulneris (Escherichia vulneris).